The sequence spans 611 residues: MAAKIYDAIVIGGGHAGVEAAFILSKKNFNVALISLNQNRLASMPCNPSIGGPAKGIITREIDALGGKQAYFADQAMIQIKMLNTSKGPAVRAIRAQIDKEKYSQIILKAVQETKNIDLIEDMVFEIQTKDNKISGVITEKNGLLETKTAIITAGTYLDSYILRGEEKYSSGPDGEKTSNSLSNSLIKLGFKLLRLKTGTPPRIYANSIDFSEVEEEILPESNLNFSIYHSKKLSKQIHCYLTYTSEKTHQIILDNINKSSMYSGLIKGIGPRYCPSVEDKIVRFKDKERHQIFFEPETIKADIMYINGLSTSMPIDVQDQMIKSINGLKNAKVAKYAYAIEYDAIDPLQLKKSLESKEIENLFFAGQINGTSGYEEAAGQGLLAGINASLKLENREALNLKRSDSYIGVLIDDLTTKGTKEPYRMLTSRAEYRLLLRNDNADIRLLKYAKYAKTLTDKEIATTEAKYDLITKKIAELENQYISINDPLAKKYNLANSTSFLQLISRHEIDIKEIVGNFPFLEELSTNVRLDGYIKKQLSQADKMLRLENLKLPEDLNYDNVVNLAFEARQKLKMIKPLTIGQASRISGINPADIQMLMFHLNLKVVKNEN.

Residues 12–17 (GGGHAG), valine 124, and serine 179 contribute to the FAD site. Position 271-285 (271-285 (GPRYCPSVEDKIVRF)) interacts with NAD(+). Residue glutamine 368 participates in FAD binding.

Belongs to the MnmG family. Homodimer. Heterotetramer of two MnmE and two MnmG subunits. FAD serves as cofactor.

The protein localises to the cytoplasm. In terms of biological role, NAD-binding protein involved in the addition of a carboxymethylaminomethyl (cmnm) group at the wobble position (U34) of certain tRNAs, forming tRNA-cmnm(5)s(2)U34. In Mycoplasma mobile (strain ATCC 43663 / 163K / NCTC 11711) (Mesomycoplasma mobile), this protein is tRNA uridine 5-carboxymethylaminomethyl modification enzyme MnmG.